A 23-amino-acid chain; its full sequence is Paralytic peptide 1 (23 aa).

C7 and C19 form a disulfide bridge.

It belongs to the GBP/PSP1/paralytic peptide family. As to expression, hemolymph.

In terms of biological role, causes rapid, rigid paralysis when injected into Lepidopteran larvae. The physiological role may be to reduce hemolymph loss following injury and promote wound healing. The polypeptide is Paralytic peptide 1 (Manduca sexta (Tobacco hawkmoth)).